Consider the following 369-residue polypeptide: Putative 2-aminoethylphosphonate import ATP-binding protein PhnT (369 aa).

The ABC transporter domain maps to 19–250 (IVLDSLRVAY…PPNRFAAEFL (232 aa)). 51–58 (GPSGSGKT) is a binding site for ATP.

It belongs to the ABC transporter superfamily. 2-aminoethylphosphonate importer (TC 3.A.1.11.5) family.

Its subcellular location is the cell inner membrane. Functionally, probably part of the PhnSTUV complex (TC 3.A.1.11.5) involved in 2-aminoethylphosphonate import. Probably responsible for energy coupling to the transport system. This is Putative 2-aminoethylphosphonate import ATP-binding protein PhnT (phnT) from Salmonella typhi.